The following is a 148-amino-acid chain: Large ribosomal subunit protein bL27m (148 aa).

Residues 1-30 constitute a mitochondrion transit peptide; the sequence is MAAAALTLRTRAAVTALLSPTAPTALAVRH. The disordered stretch occupies residues 28–48; it reads VRHASKKTGGSSKNLGGKSRG.

This sequence belongs to the bacterial ribosomal protein bL27 family. In terms of assembly, component of the mitochondrial ribosome large subunit (39S) which comprises a 16S rRNA and about 50 distinct proteins.

It localises to the mitochondrion. The chain is Large ribosomal subunit protein bL27m (Mrpl27) from Mus musculus (Mouse).